Consider the following 419-residue polypeptide: L-rhamnose isomerase (419 aa).

Mn(2+) contacts are provided by H262, D294, and D296.

Belongs to the rhamnose isomerase family. In terms of assembly, homotetramer. Requires Mn(2+) as cofactor.

It is found in the cytoplasm. It catalyses the reaction L-rhamnopyranose = L-rhamnulose. Its pathway is carbohydrate degradation; L-rhamnose degradation; glycerone phosphate from L-rhamnose: step 1/3. In terms of biological role, catalyzes the interconversion of L-rhamnose and L-rhamnulose. The sequence is that of L-rhamnose isomerase from Shigella flexneri.